The following is an 898-amino-acid chain: Serine/threonine-protein kinase TAO3 (898 aa).

Residues 24–277 (FVGLHEIGHG…SADLLRHDFV (254 aa)) form the Protein kinase domain. ATP-binding positions include 30 to 38 (IGHGSFGAV) and lysine 53. Aspartate 147 (proton acceptor) is an active-site residue. Positions 316-374 (TRNGPLTESQEEEEDSEHGSNLSRKMDSLGSNHSIPSMSVSTGSQSSSVSSMQEVLDES) are disordered. Positions 334-351 (GSNLSRKMDSLGSNHSIP) are enriched in polar residues. The span at 352-368 (SMSVSTGSQSSSVSSMQ) shows a compositional bias: low complexity. Coiled-coil stretches lie at residues 452–502 (EQEN…THAN), 548–649 (FLES…HAML), and 754–875 (LKSL…IETF). The segment at 565 to 596 (EEMNEDHSTPKKEKQERISKHKENLQHTQAEE) is disordered.

It belongs to the protein kinase superfamily. STE Ser/Thr protein kinase family. STE20 subfamily.

Its subcellular location is the cytoplasm. The protein resides in the cell membrane. It localises to the membrane raft. The protein localises to the lipid droplet. The catalysed reaction is L-seryl-[protein] + ATP = O-phospho-L-seryl-[protein] + ADP + H(+). It catalyses the reaction L-threonyl-[protein] + ATP = O-phospho-L-threonyl-[protein] + ADP + H(+). Functionally, serine/threonine-protein kinase that acts as a regulator of the p38/MAPK14 stress-activated MAPK cascade and of the MAPK8/JNK cascade. In response to DNA damage, involved in the G2/M transition DNA damage checkpoint by activating the p38/MAPK14 stress-activated MAPK cascade, probably by mediating phosphorylation of upstream MAP kinase kinases. Inhibits basal activity of the MAPK8/JNK cascade. The chain is Serine/threonine-protein kinase TAO3 (TAOK3) from Gallus gallus (Chicken).